Consider the following 31-residue polypeptide: Cyclotide cter-E (31 aa).

Residues 1-31 (GIPCAESCVWIPCTVTALLGCSCKDKVCYLD) constitute a cross-link (cyclopeptide (Gly-Asp)). Disulfide bonds link cysteine 4-cysteine 21, cysteine 8-cysteine 23, and cysteine 13-cysteine 28.

In terms of processing, contains 3 disulfide bonds. This is a cyclic peptide.

Functionally, probably participates in a plant defense mechanism. The chain is Cyclotide cter-E from Clitoria ternatea (Butterfly pea).